The chain runs to 332 residues: Probable allantoicase (332 aa).

It belongs to the allantoicase family.

It carries out the reaction allantoate + H2O = (S)-ureidoglycolate + urea. It functions in the pathway nitrogen metabolism; (S)-allantoin degradation; (S)-ureidoglycolate from allantoate (aminidohydrolase route): step 1/1. The chain is Probable allantoicase from Pseudomonas paraeruginosa (strain DSM 24068 / PA7) (Pseudomonas aeruginosa (strain PA7)).